A 29-amino-acid polypeptide reads, in one-letter code: U1-pseudomyrmecitoxin-Pt1 subunit SS2 (29 aa).

It belongs to the myrmexin family. Heterodimer composed of subunit SS2 and subunit LS1 (U1-PSDTX-Pt1e), and heterodimer composed of subunit SS2 and LS2 (U1-PSDTX-Pt1c); disulfide-linked. Expressed by the venom gland.

The protein resides in the secreted. Functionally, this heterodimer may have anti-inflammatory properties, since the myrmexin complex (composed of 6 SS-LS heterodimers) inhibits carrageenin-induced edema in a dose-dependent manner (after subcutaneous injection into rats). In Pseudomyrmex triplarinus (Ant), this protein is U1-pseudomyrmecitoxin-Pt1 subunit SS2.